A 261-amino-acid chain; its full sequence is Eukaryotic translation initiation factor 3 subunit J-A (261 aa).

Residues 1-11 (MAAAAAAAAAA) show a composition bias toward low complexity. Positions 1–113 (MAAAAAAAAA…EPEESKVLTP (113 aa)) are disordered. The interval 4–72 (AAAAAAAAGD…KEEAEVKPEV (69 aa)) is sufficient for interaction with EIF3B. 3 positions are modified to phosphoserine: serine 14, serine 16, and serine 23. The span at 43-64 (EGEDEDEDVKDNWDDDDDENKE) shows a compositional bias: acidic residues. Residues 65-109 (EAEVKPEVKISEKKKIAEKIKEKERQQKKRQEEIKKRLEEPEESK) are compositionally biased toward basic and acidic residues. Residues 73 to 138 (KISEKKKIAE…ESDLELAKET (66 aa)) are a coiled coil. Residue lysine 109 forms a Glycyl lysine isopeptide (Lys-Gly) (interchain with G-Cter in SUMO2) linkage. Threonine 112 carries the phosphothreonine modification. Position 130 is a phosphoserine (serine 130). The segment at 246–261 (YGGYEGGYVQDYEDFM) is promotes stable association with the 40S ribosome. At tyrosine 257 the chain carries Phosphotyrosine.

Belongs to the eIF-3 subunit J family. In terms of assembly, component of the eukaryotic translation initiation factor 3 (eIF-3) complex, which is composed of 13 subunits: EIF3A, EIF3B, EIF3C, EIF3D, EIF3E, EIF3F, EIF3G, EIF3H, EIF3I, EIF3J, EIF3K, EIF3L and EIF3M. The eIF-3 complex appears to include 3 stable modules: module A is composed of EIF3A, EIF3B, EIF3G and EIF3I; module B is composed of EIF3F, EIF3H, and EIF3M; and module C is composed of EIF3C, EIF3D, EIF3E, EIF3K and EIF3L. EIF3C of module C binds EIF3B of module A and EIF3H of module B, thereby linking the three modules. EIF3J is a labile subunit that binds to the eIF-3 complex via EIF3B. The eIF-3 complex interacts with RPS6KB1 under conditions of nutrient depletion. Mitogenic stimulation leads to binding and activation of a complex composed of MTOR and RPTOR, leading to phosphorylation and release of RPS6KB1 and binding of EIF4B to eIF-3. Phosphorylated. Phosphorylation is enhanced upon serum stimulation.

It localises to the cytoplasm. Functionally, component of the eukaryotic translation initiation factor 3 (eIF-3) complex, which is required for several steps in the initiation of protein synthesis. The eIF-3 complex associates with the 40S ribosome and facilitates the recruitment of eIF-1, eIF-1A, eIF-2:GTP:methionyl-tRNAi and eIF-5 to form the 43S pre-initiation complex (43S PIC). The eIF-3 complex stimulates mRNA recruitment to the 43S PIC and scanning of the mRNA for AUG recognition. The eIF-3 complex is also required for disassembly and recycling of post-termination ribosomal complexes and subsequently prevents premature joining of the 40S and 60S ribosomal subunits prior to initiation. The eIF-3 complex specifically targets and initiates translation of a subset of mRNAs involved in cell proliferation, including cell cycling, differentiation and apoptosis, and uses different modes of RNA stem-loop binding to exert either translational activation or repression. This subunit binds directly within the mRNA entry channel of the 40S ribosome to the aminoacyl (A) site. It may regulate the interaction between the 43S PIC and mRNA. The sequence is that of Eukaryotic translation initiation factor 3 subunit J-A (Eif3j1) from Mus musculus (Mouse).